A 214-amino-acid chain; its full sequence is Phosphatidylserine decarboxylase proenzyme (214 aa).

The active-site Schiff-base intermediate with substrate; via pyruvic acid is the Ser183. Position 183 is a pyruvic acid (Ser); by autocatalysis (Ser183).

Belongs to the phosphatidylserine decarboxylase family. PSD-A subfamily. In terms of assembly, heterodimer of a large membrane-associated beta subunit and a small pyruvoyl-containing alpha subunit. It depends on pyruvate as a cofactor. Post-translationally, is synthesized initially as an inactive proenzyme. Formation of the active enzyme involves a self-maturation process in which the active site pyruvoyl group is generated from an internal serine residue via an autocatalytic post-translational modification. Two non-identical subunits are generated from the proenzyme in this reaction, and the pyruvate is formed at the N-terminus of the alpha chain, which is derived from the carboxyl end of the proenzyme. The post-translation cleavage follows an unusual pathway, termed non-hydrolytic serinolysis, in which the side chain hydroxyl group of the serine supplies its oxygen atom to form the C-terminus of the beta chain, while the remainder of the serine residue undergoes an oxidative deamination to produce ammonia and the pyruvoyl prosthetic group on the alpha chain.

It localises to the cell membrane. It catalyses the reaction a 1,2-diacyl-sn-glycero-3-phospho-L-serine + H(+) = a 1,2-diacyl-sn-glycero-3-phosphoethanolamine + CO2. The protein operates within phospholipid metabolism; phosphatidylethanolamine biosynthesis; phosphatidylethanolamine from CDP-diacylglycerol: step 2/2. Catalyzes the formation of phosphatidylethanolamine (PtdEtn) from phosphatidylserine (PtdSer). This chain is Phosphatidylserine decarboxylase proenzyme, found in Desulfotalea psychrophila (strain LSv54 / DSM 12343).